Consider the following 421-residue polypeptide: Acetate kinase (421 aa).

Asn7 lines the Mg(2+) pocket. Lys14 is a binding site for ATP. Residue Arg91 participates in substrate binding. The active-site Proton donor/acceptor is the Asp148. ATP-binding positions include 208–212 (HIGNG) and 283–285 (DRR). Residue Glu387 coordinates Mg(2+).

Belongs to the acetokinase family. In terms of assembly, homodimer. It depends on Mg(2+) as a cofactor. The cofactor is Mn(2+).

Its subcellular location is the cytoplasm. The enzyme catalyses acetate + ATP = acetyl phosphate + ADP. The protein operates within metabolic intermediate biosynthesis; acetyl-CoA biosynthesis; acetyl-CoA from acetate: step 1/2. Its function is as follows. Catalyzes the formation of acetyl phosphate from acetate and ATP. Can also catalyze the reverse reaction. This is Acetate kinase from Trichlorobacter lovleyi (strain ATCC BAA-1151 / DSM 17278 / SZ) (Geobacter lovleyi).